The sequence spans 212 residues: Pyridoxine/pyridoxamine 5'-phosphate oxidase (212 aa).

Residues 8-11 (RRSY) and lysine 66 contribute to the substrate site. Residues 61-66 (RIVLLK), 76-77 (FT), arginine 82, lysine 83, and glutamine 105 contribute to the FMN site. Residues tyrosine 123, arginine 127, and serine 131 each coordinate substrate. FMN is bound by residues 140-141 (QS) and tryptophan 184. 190–192 (RLH) lines the substrate pocket. Residue arginine 194 coordinates FMN.

This sequence belongs to the pyridoxamine 5'-phosphate oxidase family. Homodimer. Requires FMN as cofactor.

It carries out the reaction pyridoxamine 5'-phosphate + O2 + H2O = pyridoxal 5'-phosphate + H2O2 + NH4(+). It catalyses the reaction pyridoxine 5'-phosphate + O2 = pyridoxal 5'-phosphate + H2O2. The protein operates within cofactor metabolism; pyridoxal 5'-phosphate salvage; pyridoxal 5'-phosphate from pyridoxamine 5'-phosphate: step 1/1. It participates in cofactor metabolism; pyridoxal 5'-phosphate salvage; pyridoxal 5'-phosphate from pyridoxine 5'-phosphate: step 1/1. Functionally, catalyzes the oxidation of either pyridoxine 5'-phosphate (PNP) or pyridoxamine 5'-phosphate (PMP) into pyridoxal 5'-phosphate (PLP). The sequence is that of Pyridoxine/pyridoxamine 5'-phosphate oxidase from Cupriavidus necator (strain ATCC 17699 / DSM 428 / KCTC 22496 / NCIMB 10442 / H16 / Stanier 337) (Ralstonia eutropha).